We begin with the raw amino-acid sequence, 232 residues long: Expansin-YoaJ (232 aa).

Residues 1-25 (MKKIMSAFVGMVLLTIFCFSPQASA) form the signal peptide. One can recognise an Expansin-like EG45 domain in the interval 58 to 127 (ITAINPADLN…MKDGKINIKW (70 aa)).

The protein localises to the secreted. It is found in the cell wall. Its function is as follows. May promote colonization of plant roots. May cause loosening and extension of plant cell walls by disrupting non-covalent bonding between cellulose microfibrils and matrix glucans. Has very low expansin activity (in vitro). No enzymatic activity has been found. Binds to peptidoglycan and to plant cell walls. The polypeptide is Expansin-YoaJ (yoaJ) (Bacillus subtilis (strain 168)).